The primary structure comprises 571 residues: Potassium-transporting ATPase potassium-binding subunit (571 aa).

A run of 12 helical transmembrane segments spans residues 5–25 (GWMQ…PLGG), 64–84 (LAYA…LYAL), 136–156 (GLTH…VALI), 179–199 (LYVL…QGMP), 220–240 (VGPV…GGFF), 254–274 (LSNF…TNVF), 285–305 (WAIL…TYWA), 330–350 (FGIA…CGAV), 375–395 (IIGG…VAIF), 421–441 (MLGI…ATVV), 488–508 (LAIG…AIAG), and 527–547 (GGLF…LTFF).

This sequence belongs to the KdpA family. The system is composed of three essential subunits: KdpA, KdpB and KdpC.

The protein localises to the cell inner membrane. Its function is as follows. Part of the high-affinity ATP-driven potassium transport (or Kdp) system, which catalyzes the hydrolysis of ATP coupled with the electrogenic transport of potassium into the cytoplasm. This subunit binds the periplasmic potassium ions and delivers the ions to the membrane domain of KdpB through an intramembrane tunnel. This chain is Potassium-transporting ATPase potassium-binding subunit, found in Methylorubrum extorquens (strain CM4 / NCIMB 13688) (Methylobacterium extorquens).